Reading from the N-terminus, the 1295-residue chain is Phosphoribosylformylglycinamidine synthase (1295 aa).

Residues 304–326 are disordered; the sequence is WPGAATGSGGEIRDEGATGRGAK. ATP-binding positions include 306–317, 385–387, and A677; these read GAATGSGGEIRD and TGY. Mg(2+) is bound by residues D678, E717, N721, and D884. Residues 995–1012 show a composition bias toward basic and acidic residues; it reads LRDNPESADQEHASRQDD. The segment at 995-1017 is disordered; it reads LRDNPESADQEHASRQDDNDPGL. The 254-residue stretch at 1042–1295 folds into the Glutamine amidotransferase type-1 domain; sequence VAVLREQGVN…LFRNARKQLG (254 aa). C1135 (nucleophile) is an active-site residue. Residues H1260 and E1262 contribute to the active site.

It in the N-terminal section; belongs to the FGAMS family. Monomer.

It localises to the cytoplasm. The catalysed reaction is N(2)-formyl-N(1)-(5-phospho-beta-D-ribosyl)glycinamide + L-glutamine + ATP + H2O = 2-formamido-N(1)-(5-O-phospho-beta-D-ribosyl)acetamidine + L-glutamate + ADP + phosphate + H(+). Its pathway is purine metabolism; IMP biosynthesis via de novo pathway; 5-amino-1-(5-phospho-D-ribosyl)imidazole from N(2)-formyl-N(1)-(5-phospho-D-ribosyl)glycinamide: step 1/2. Functionally, phosphoribosylformylglycinamidine synthase involved in the purines biosynthetic pathway. Catalyzes the ATP-dependent conversion of formylglycinamide ribonucleotide (FGAR) and glutamine to yield formylglycinamidine ribonucleotide (FGAM) and glutamate. The chain is Phosphoribosylformylglycinamidine synthase from Sodalis glossinidius (strain morsitans).